The chain runs to 120 residues: Large ribosomal subunit protein uL18 (120 aa).

This sequence belongs to the universal ribosomal protein uL18 family. Part of the 50S ribosomal subunit; part of the 5S rRNA/L5/L18/L25 subcomplex. Contacts the 5S and 23S rRNAs.

This is one of the proteins that bind and probably mediate the attachment of the 5S RNA into the large ribosomal subunit, where it forms part of the central protuberance. This is Large ribosomal subunit protein uL18 from Staphylococcus haemolyticus (strain JCSC1435).